The sequence spans 77 residues: Small ribosomal subunit protein uS17 (77 aa).

Belongs to the universal ribosomal protein uS17 family. Part of the 30S ribosomal subunit.

One of the primary rRNA binding proteins, it binds specifically to the 5'-end of 16S ribosomal RNA. The chain is Small ribosomal subunit protein uS17 from Rickettsia bellii (strain OSU 85-389).